The following is a 159-amino-acid chain: SsrA-binding protein (159 aa).

Belongs to the SmpB family.

The protein resides in the cytoplasm. In terms of biological role, required for rescue of stalled ribosomes mediated by trans-translation. Binds to transfer-messenger RNA (tmRNA), required for stable association of tmRNA with ribosomes. tmRNA and SmpB together mimic tRNA shape, replacing the anticodon stem-loop with SmpB. tmRNA is encoded by the ssrA gene; the 2 termini fold to resemble tRNA(Ala) and it encodes a 'tag peptide', a short internal open reading frame. During trans-translation Ala-aminoacylated tmRNA acts like a tRNA, entering the A-site of stalled ribosomes, displacing the stalled mRNA. The ribosome then switches to translate the ORF on the tmRNA; the nascent peptide is terminated with the 'tag peptide' encoded by the tmRNA and targeted for degradation. The ribosome is freed to recommence translation, which seems to be the essential function of trans-translation. The polypeptide is SsrA-binding protein (Salinispora tropica (strain ATCC BAA-916 / DSM 44818 / JCM 13857 / NBRC 105044 / CNB-440)).